A 261-amino-acid polypeptide reads, in one-letter code: Cytochrome c oxidase subunit 3 (261 aa).

At 1–15 the chain is on the mitochondrial matrix side; the sequence is MTHQTHAYHMVNPSP. Residues 16-34 form a helical membrane-spanning segment; it reads WPLTGALSALLMTSGLIMW. Topologically, residues 35–40 are mitochondrial intermembrane; sequence FHFNST. A helical transmembrane segment spans residues 41-66; sequence TLLMLGLTTNMLTMYQWWRDIIREST. The Mitochondrial matrix portion of the chain corresponds to 67–72; it reads FQGHHT. The helical transmembrane segment at 73–105 threads the bilayer; sequence PNVQKGLRYGMILFIISEVLFFTGFFWAFYHSS. The Mitochondrial intermembrane portion of the chain corresponds to 106–128; that stretch reads LAPTPELGGCWPPTGIHPLNPLE. A helical membrane pass occupies residues 129 to 152; the sequence is VPLLNTSVLLASGVSITWAHHSLM. Topologically, residues 153 to 155 are mitochondrial matrix; that stretch reads EGN. A helical membrane pass occupies residues 156–183; it reads RNHMLQALFITIALGVYFTLLQASEYYE. The Mitochondrial intermembrane segment spans residues 184–190; the sequence is APFTISD. A helical membrane pass occupies residues 191 to 223; that stretch reads GVYGSTFFVATGFHGLHVIIGSTFLIVCFFRQL. Residues 224 to 232 lie on the Mitochondrial matrix side of the membrane; sequence KFHFTSSHH. The chain crosses the membrane as a helical span at residues 233-256; sequence FGFEAAAWYWHFVDVVWLFLYVSI. Topologically, residues 257-261 are mitochondrial intermembrane; sequence YWWGS.

This sequence belongs to the cytochrome c oxidase subunit 3 family. As to quaternary structure, component of the cytochrome c oxidase (complex IV, CIV), a multisubunit enzyme composed of 14 subunits. The complex is composed of a catalytic core of 3 subunits MT-CO1, MT-CO2 and MT-CO3, encoded in the mitochondrial DNA, and 11 supernumerary subunits COX4I, COX5A, COX5B, COX6A, COX6B, COX6C, COX7A, COX7B, COX7C, COX8 and NDUFA4, which are encoded in the nuclear genome. The complex exists as a monomer or a dimer and forms supercomplexes (SCs) in the inner mitochondrial membrane with NADH-ubiquinone oxidoreductase (complex I, CI) and ubiquinol-cytochrome c oxidoreductase (cytochrome b-c1 complex, complex III, CIII), resulting in different assemblies (supercomplex SCI(1)III(2)IV(1) and megacomplex MCI(2)III(2)IV(2)).

It is found in the mitochondrion inner membrane. It carries out the reaction 4 Fe(II)-[cytochrome c] + O2 + 8 H(+)(in) = 4 Fe(III)-[cytochrome c] + 2 H2O + 4 H(+)(out). In terms of biological role, component of the cytochrome c oxidase, the last enzyme in the mitochondrial electron transport chain which drives oxidative phosphorylation. The respiratory chain contains 3 multisubunit complexes succinate dehydrogenase (complex II, CII), ubiquinol-cytochrome c oxidoreductase (cytochrome b-c1 complex, complex III, CIII) and cytochrome c oxidase (complex IV, CIV), that cooperate to transfer electrons derived from NADH and succinate to molecular oxygen, creating an electrochemical gradient over the inner membrane that drives transmembrane transport and the ATP synthase. Cytochrome c oxidase is the component of the respiratory chain that catalyzes the reduction of oxygen to water. Electrons originating from reduced cytochrome c in the intermembrane space (IMS) are transferred via the dinuclear copper A center (CU(A)) of subunit 2 and heme A of subunit 1 to the active site in subunit 1, a binuclear center (BNC) formed by heme A3 and copper B (CU(B)). The BNC reduces molecular oxygen to 2 water molecules using 4 electrons from cytochrome c in the IMS and 4 protons from the mitochondrial matrix. This chain is Cytochrome c oxidase subunit 3 (MT-CO3), found in Litocranius walleri (Gerenuk).